The following is a 599-amino-acid chain: Calmodulin-binding protein 60 E (599 aa).

A disordered region spans residues 1 to 21; sequence MNKRGYECSQEDTDKLPESKR. A calmodulin-binding region spans residues 1–80; sequence MNKRGYECSQ…LTSRSPEPKR (80 aa). The interval 150–273 is DNA-binding; that stretch reads EDDEDWTREH…VLHKKLLKAN (124 aa).

Belongs to the plant ACBP60 protein family. As to quaternary structure, interacts with calmodulin (CaM).

It is found in the nucleus. Functionally, transcription activator that binds DNA in a sequence-specific manner, likely 5'-GAAATTTTGG-3', to promote the expression of target genes. In Arabidopsis thaliana (Mouse-ear cress), this protein is Calmodulin-binding protein 60 E.